A 416-amino-acid chain; its full sequence is Vacuole membrane protein KMS2 (416 aa).

Position 2 is an N-acetylglycine (Gly2). The Cytoplasmic portion of the chain corresponds to 2 to 59; that stretch reads GYGNRASSKTPAISGLREKHQQDLEKLTLTSQPFKTLRLFVVAVFLYVRRWSSYLLAN. Residues 60–80 traverse the membrane as a helical segment; it reads VGWLILFCSIFVAFAALLVTL. Residues 81–100 are Lumenal-facing; sequence DGPHVKHVEELSEYTRFGLW. Residues 101-123 form a helical membrane-spanning segment; that stretch reads WIFLGVASSIGLGSGLHTFVLYL. The Cytoplasmic segment spans residues 124 to 249; the sequence is GPHIALFTIK…WLLSHSQYLN (126 aa). A helical transmembrane segment spans residues 250–270; that stretch reads FFTILILASVPNPLFDLAGIM. Residues 271-281 are Lumenal-facing; it reads CGQFEKPFWEF. Residues 282-304 form a helical membrane-spanning segment; the sequence is FLATLIGKAIIKTHIQTVFIICV. Residues 305-315 are Cytoplasmic-facing; sequence CNNQLLDWVEN. The helical transmembrane segment at 316 to 336 threads the bilayer; it reads ELIYILSFVPGFASALPELTA. The Lumenal portion of the chain corresponds to 337–364; the sequence is KLRLMKEKYLIASPPVSSDINVKKWDLS. A helical membrane pass occupies residues 365-385; the sequence is FASVWNGVVWLMLLNFFGQIV. Over 386–416 the chain is Cytoplasmic; it reads TSTAQRYLKKQQEEELDALTNKSSLTSKKSK.

It belongs to the VMP1 family.

It is found in the endoplasmic reticulum membrane. Involved in the early secretory pathway. Required for the correct export of secretory products from the endoplasmic reticulum (ER) and involved in the maintenance of ER integrity. This Arabidopsis thaliana (Mouse-ear cress) protein is Vacuole membrane protein KMS2.